Consider the following 699-residue polypeptide: Elongation factor G (699 aa).

One can recognise a tr-type G domain in the interval 8-289 (ERYRNIGISA…AVVEYMPAPT (282 aa)). Residues 17 to 24 (AHIDAGKT), 88 to 92 (DTPGH), and 142 to 145 (NKMD) contribute to the GTP site.

Belongs to the TRAFAC class translation factor GTPase superfamily. Classic translation factor GTPase family. EF-G/EF-2 subfamily.

The protein localises to the cytoplasm. In terms of biological role, catalyzes the GTP-dependent ribosomal translocation step during translation elongation. During this step, the ribosome changes from the pre-translocational (PRE) to the post-translocational (POST) state as the newly formed A-site-bound peptidyl-tRNA and P-site-bound deacylated tRNA move to the P and E sites, respectively. Catalyzes the coordinated movement of the two tRNA molecules, the mRNA and conformational changes in the ribosome. This chain is Elongation factor G, found in Variovorax paradoxus (strain S110).